A 584-amino-acid polypeptide reads, in one-letter code: Complement component C8 alpha chain (584 aa).

The N-terminal stretch at 1–20 is a signal peptide; that stretch reads MFAVVFFILSLMTCQPGVTA. Positions 21–30 are excised as a propeptide; that stretch reads QEKVNQRVRR. The 54-residue stretch at 38–91 folds into the TSP type-1 1 domain; sequence TCQLSNWSEWTDCFPCQDKKYRHRSLLQPNKFGGTICSGDIWDQASCSSSTTCV. 7 disulfides stabilise this stretch: cysteine 39–cysteine 74, cysteine 50–cysteine 84, cysteine 53–cysteine 90, cysteine 96–cysteine 108, cysteine 102–cysteine 121, cysteine 115–cysteine 130, and cysteine 140–cysteine 177. Tryptophan 44 carries a C-linked (Man) tryptophan glycan. One can recognise an LDL-receptor class A domain in the interval 94–132; that stretch reads AQCGQDFQCKETGRCLKRHLVCNGDQDCLDGSDEDDCED. Positions 113, 116, 118, 120, 126, and 127 each coordinate Ca(2+). Residues 135–498 form the MACPF domain; the sequence is AIDEDCSQYE…QYLMEFNACR (364 aa). The next 4 membrane-spanning stretches (beta stranded) occupy residues 248-256, 259-266, 377-384, and 390-395; these read FGVTIGIGP, SPLLVGVG, GGSLGIQY, and VGGGLS. The cysteines at positions 375 and 399 are disulfide-linked. Asparagine 437 carries an N-linked (GlcNAc...) asparagine glycan. Intrachain disulfides connect cysteine 497/cysteine 544, cysteine 499/cysteine 515, cysteine 502/cysteine 517, and cysteine 519/cysteine 528. The EGF-like domain maps to 499–529; the sequence is CGPCFNNGVPILEGTSCRCQCRLGSLGAACE. One can recognise a TSP type-1 2 domain in the interval 539 to 583; it reads DGSWSCWSSWSVCRAGIQERRRECDNPAPQNGGASCPGRKVQTQA. C-linked (Man) tryptophan glycosylation is found at tryptophan 542, tryptophan 545, and tryptophan 548. Cystine bridges form between cysteine 551–cysteine 584 and cysteine 562–cysteine 574. Positions 562-584 are disordered; it reads CDNPAPQNGGASCPGRKVQTQAC.

Belongs to the complement C6/C7/C8/C9 family. In terms of assembly, heterotrimer of 3 chains: alpha (C8A), beta (C8B) and gamma (C8G); the alpha and gamma chains are disulfide bonded. Component of the membrane attack complex (MAC), composed of complement C5b, C6, C7, C8A, C8B, C8G and multiple copies of the pore-forming subunit C9.

Its subcellular location is the secreted. The protein localises to the target cell membrane. Its activity is regulated as follows. Membrane attack complex (MAC) assembly is inhibited by CD59, thereby protecting self-cells from damage during complement activation. CD59 acts by binding to the beta-haipins of C8 (C8A and C8B), forming an intermolecular beta-sheet that prevents incorporation of the multiple copies of C9 required for complete formation of the osmolytic pore. MAC assembly is also inhibited by clusterin (CLU) chaperones that inhibit polymerization of C9. Its function is as follows. Component of the membrane attack complex (MAC), a multiprotein complex activated by the complement cascade, which inserts into a target cell membrane and forms a pore, leading to target cell membrane rupture and cell lysis. The MAC is initiated by proteolytic cleavage of C5 into complement C5b in response to the classical, alternative, lectin and GZMK complement pathways. The complement pathways consist in a cascade of proteins that leads to phagocytosis and breakdown of pathogens and signaling that strengthens the adaptive immune system. C8A, together with C8B and C8G, inserts into the target membrane, but does not form pores by itself. During MAC assembly, associates with C5b, C6 and C7 to form the C5b8 intermediate complex that inserts into the target membrane and traverses the bilayer increasing membrane rigidity. The polypeptide is Complement component C8 alpha chain (Homo sapiens (Human)).